Reading from the N-terminus, the 2410-residue chain is Coprinoferrin synthetase (2410 aa).

The adenylation 1 stretch occupies residues 237 to 646 (LERRAKTNPH…GRIDTQIKVR (410 aa)). Positions 783–860 (RDCTPLEAEV…DIAQLVHVST (78 aa)) constitute a Carrier 1 domain. Serine 820 carries the post-translational modification O-(pantetheine 4'-phosphoryl)serine. Residues 891-1260 (DILPPFPVQE…SVEAVVNVHD (370 aa)) form a condensation 1 region. The segment at 1298–1317 (ELPLPSRRSPEPVRKVNDDE) is disordered. Positions 1305-1314 (RSPEPVRKVN) are enriched in basic and acidic residues. A Carrier 2 domain is found at 1324–1400 (LLDPVVVADL…RLARVVSNNK (77 aa)). Serine 1361 is subject to O-(pantetheine 4'-phosphoryl)serine. A condensation 2 region spans residues 1436–1839 (IIPSTALQSG…RIGRTFSVPS (404 aa)). The Carrier 3 domain maps to 1858–1932 (VQAGIIHPVL…DLVLQATEIK (75 aa)). Serine 1893 carries the O-(pantetheine 4'-phosphoryl)serine modification. Positions 1992–2315 (FQYLFTFKLP…TPIFNVNVNV (324 aa)) are condensation 3.

The protein belongs to the NRP synthetase family.

Its pathway is siderophore biosynthesis. Functionally, nonribosomal peptide synthase; part of the gene cluster that mediates the biosynthesis of coprinoferrin, an acylated tripeptide hydroxamate siderophore. The biosynthesis of coprinoferrin depends on the hydroxylation of ornithine to N(5)-hydroxyornithine, catalyzed by the monooxygenase cpf2. The second step, the acylation of N(5)-hydroxy-L-ornithine to yield N(5)-hexanoyl-N(5)-hydroxyl-L-ornithine is catalyzed by a not yet identified acyltransferase. Finally, assembly of coprinoferrin is catalyzed by the nonribosomal peptide synthase (NRPS) cpf1 via amide bond formation between three N(5)-hexanoyl-N(5)-hydroxyl-L-ornithine molecules to release the linear trimer. Interestingly, proteins seemingly not directly related to biosynthesis, such as transcription factors, replication factors, and autophagy-related proteins, are conserved among the clusters homologous to the coprinoferrin cluster, suggesting that the cluster may also play developmental and cell biological functions. In Coprinopsis cinerea (strain Okayama-7 / 130 / ATCC MYA-4618 / FGSC 9003) (Inky cap fungus), this protein is Coprinoferrin synthetase.